Here is a 345-residue protein sequence, read N- to C-terminus: Uroporphyrinogen decarboxylase (345 aa).

Substrate is bound by residues 27-31 (RQAGR), F46, D76, Y152, S207, and H320.

Belongs to the uroporphyrinogen decarboxylase family. Homodimer.

Its subcellular location is the cytoplasm. The catalysed reaction is uroporphyrinogen III + 4 H(+) = coproporphyrinogen III + 4 CO2. Its pathway is porphyrin-containing compound metabolism; protoporphyrin-IX biosynthesis; coproporphyrinogen-III from 5-aminolevulinate: step 4/4. Its function is as follows. Catalyzes the decarboxylation of four acetate groups of uroporphyrinogen-III to yield coproporphyrinogen-III. The polypeptide is Uroporphyrinogen decarboxylase (Geobacillus kaustophilus (strain HTA426)).